The following is a 379-amino-acid chain: MSTVLPEDSVGLVTPQTARFDEPLALACGRSLASYELVYETYGSLNASASNAVLICHALSGHHHAAGYHATTDRKPGWWDSCIGPGKPIDTNRFFVVSLNNLGGCNGSTGPSSVNPATGKPYGADFPVLTVEDWVHSQARLADRLGIRQWAAIVGGSLGGMQALQWTMTYPDRVRHCVDIASAPKLSAQNIAFNEVARQAILTDPEFHGGSFQDQGVIPKRGLMLARMVGHITYLSDDSMGEKFGRELKSDKLNYDFHSVEFQVESYLRYQGEEFSGRFDANTYLLMTKALDYFDPAAANGGDLAATLAHVTADYCIMSFTTDWRFSPARSREIVDALMAARKNVCYLEIDSPYGHDAFLIPTPRYMQGFANYMNRIAI.

One can recognise an AB hydrolase-1 domain in the interval 51–360 (NAVLICHALS…DSPYGHDAFL (310 aa)). The active-site Nucleophile is serine 157. Residue arginine 227 coordinates substrate. Residues aspartate 323 and histidine 356 contribute to the active site. Position 357 (aspartate 357) interacts with substrate.

This sequence belongs to the AB hydrolase superfamily. MetX family. In terms of assembly, homodimer.

It is found in the cytoplasm. The enzyme catalyses L-homoserine + succinyl-CoA = O-succinyl-L-homoserine + CoA. It functions in the pathway amino-acid biosynthesis; L-methionine biosynthesis via de novo pathway; O-succinyl-L-homoserine from L-homoserine: step 1/1. Functionally, transfers a succinyl group from succinyl-CoA to L-homoserine, forming succinyl-L-homoserine. In Pseudomonas putida (strain W619), this protein is Homoserine O-succinyltransferase.